The chain runs to 948 residues: UvrABC system protein A (948 aa).

An ATP-binding site is contributed by 33–40 (GLSGSGKS). Residues 252-279 (CPICGFSIGELEPRMFSFNSPFGACPTC) form a C4-type zinc finger. ABC transporter domains are found at residues 309–587 (WIPT…KKSL) and 607–935 (ASDR…KYLK). Position 639-646 (639-646 (GVSGSGKS)) interacts with ATP. The C4-type zinc-finger motif lies at 738 to 764 (CEACKGDGIIKIEMHFLPDVYVPCEVC).

Belongs to the ABC transporter superfamily. UvrA family. Forms a heterotetramer with UvrB during the search for lesions.

It is found in the cytoplasm. Its function is as follows. The UvrABC repair system catalyzes the recognition and processing of DNA lesions. UvrA is an ATPase and a DNA-binding protein. A damage recognition complex composed of 2 UvrA and 2 UvrB subunits scans DNA for abnormalities. When the presence of a lesion has been verified by UvrB, the UvrA molecules dissociate. The chain is UvrABC system protein A from Staphylococcus aureus (strain MSSA476).